The sequence spans 370 residues: GTPase Obg (370 aa).

The Obg domain occupies 1-159; sequence MKFVDEAYID…KKLKLELRVL (159 aa). The region spanning 160-333 is the OBG-type G domain; the sequence is ADVGLLGMPN…LVQAIYQHVA (174 aa). GTP contacts are provided by residues 166–173, 191–195, 213–216, 283–286, and 314–316; these read GMPNAGKS, FTTLH, DVPG, NKLD, and SAL. Residues Ser-173 and Thr-193 each coordinate Mg(2+). Positions 346–370 are disordered; sequence FAEPEADESDDEPRFAPQADDPRFR.

This sequence belongs to the TRAFAC class OBG-HflX-like GTPase superfamily. OBG GTPase family. Monomer. It depends on Mg(2+) as a cofactor.

The protein localises to the cytoplasm. Functionally, an essential GTPase which binds GTP, GDP and possibly (p)ppGpp with moderate affinity, with high nucleotide exchange rates and a fairly low GTP hydrolysis rate. Plays a role in control of the cell cycle, stress response, ribosome biogenesis and in those bacteria that undergo differentiation, in morphogenesis control. The polypeptide is GTPase Obg (Methylibium petroleiphilum (strain ATCC BAA-1232 / LMG 22953 / PM1)).